A 238-amino-acid chain; its full sequence is Ribosomal RNA small subunit methyltransferase G (238 aa).

S-adenosyl-L-methionine contacts are provided by residues Gly77, Phe82, 128-129, and Arg147; that span reads AE.

Belongs to the methyltransferase superfamily. RNA methyltransferase RsmG family.

The protein localises to the cytoplasm. In terms of biological role, specifically methylates the N7 position of guanine in position 535 of 16S rRNA. This Listeria monocytogenes serotype 4b (strain CLIP80459) protein is Ribosomal RNA small subunit methyltransferase G.